We begin with the raw amino-acid sequence, 126 residues long: Histone H2B 5 (126 aa).

Positions 1 to 12 are enriched in low complexity; the sequence is MPEPAKSAPAPK. Residues 1-35 form a disordered region; sequence MPEPAKSAPAPKKGSKKAVTKTQKKGDKKRRKSRK. 2 positions are modified to N6-acetyllysine: K6 and K13. The span at 13–34 shows a compositional bias: basic residues; that stretch reads KGSKKAVTKTQKKGDKKRRKSR. S15 is subject to Phosphoserine. An N6-acetyllysine mark is found at K16 and K21. Residue S113 is glycosylated (O-linked (GlcNAc) serine). A Glycyl lysine isopeptide (Lys-Gly) (interchain with G-Cter in ubiquitin) cross-link involves residue K121.

The protein belongs to the histone H2B family. As to quaternary structure, the nucleosome is a histone octamer containing two molecules each of H2A, H2B, H3 and H4 assembled in one H3-H4 heterotetramer and two H2A-H2B heterodimers. The octamer wraps approximately 147 bp of DNA. Monoubiquitination of Lys-121 by the BRE1 gives a specific tag for epigenetic transcriptional activation and is also prerequisite for histone H3 'Lys-4' and 'Lys-79' methylation. In terms of processing, phosphorylated on Ser-15 during apoptosis; which facilitates apoptotic chromatin condensation. Post-translationally, glcNAcylation at Ser-113 promotes monoubiquitination of Lys-121. It fluctuates in response to extracellular glucose, and associates with transcribed genes.

The protein resides in the nucleus. It localises to the chromosome. Core component of nucleosome. Nucleosomes wrap and compact DNA into chromatin, limiting DNA accessibility to the cellular machineries which require DNA as a template. Histones thereby play a central role in transcription regulation, DNA repair, DNA replication and chromosomal stability. DNA accessibility is regulated via a complex set of post-translational modifications of histones, also called histone code, and nucleosome remodeling. This is Histone H2B 5 (H2B-V) from Gallus gallus (Chicken).